The sequence spans 20 residues: Cytochrome c oxidase subunit 6A1, mitochondrial (20 aa).

The protein belongs to the cytochrome c oxidase subunit 6A family. In terms of assembly, component of the cytochrome c oxidase (complex IV, CIV), a multisubunit enzyme composed of 14 subunits. The complex is composed of a catalytic core of 3 subunits MT-CO1, MT-CO2 and MT-CO3, encoded in the mitochondrial DNA, and 11 supernumerary subunits COX4I, COX5A, COX5B, COX6A, COX6B, COX6C, COX7A, COX7B, COX7C, COX8 and NDUFA4, which are encoded in the nuclear genome. The complex exists as a monomer or a dimer and forms supercomplexes (SCs) in the inner mitochondrial membrane with NADH-ubiquinone oxidoreductase (complex I, CI) and ubiquinol-cytochrome c oxidoreductase (cytochrome b-c1 complex, complex III, CIII), resulting in different assemblies (supercomplex SCI(1)III(2)IV(1) and megacomplex MCI(2)III(2)IV(2)). In terms of tissue distribution, liver specific isoform.

It is found in the mitochondrion inner membrane. It functions in the pathway energy metabolism; oxidative phosphorylation. In terms of biological role, component of the cytochrome c oxidase, the last enzyme in the mitochondrial electron transport chain which drives oxidative phosphorylation. The respiratory chain contains 3 multisubunit complexes succinate dehydrogenase (complex II, CII), ubiquinol-cytochrome c oxidoreductase (cytochrome b-c1 complex, complex III, CIII) and cytochrome c oxidase (complex IV, CIV), that cooperate to transfer electrons derived from NADH and succinate to molecular oxygen, creating an electrochemical gradient over the inner membrane that drives transmembrane transport and the ATP synthase. Cytochrome c oxidase is the component of the respiratory chain that catalyzes the reduction of oxygen to water. Electrons originating from reduced cytochrome c in the intermembrane space (IMS) are transferred via the dinuclear copper A center (CU(A)) of subunit 2 and heme A of subunit 1 to the active site in subunit 1, a binuclear center (BNC) formed by heme A3 and copper B (CU(B)). The BNC reduces molecular oxygen to 2 water molecules unsing 4 electrons from cytochrome c in the IMS and 4 protons from the mitochondrial matrix. In Canis lupus familiaris (Dog), this protein is Cytochrome c oxidase subunit 6A1, mitochondrial (COX6A1).